Here is a 236-residue protein sequence, read N- to C-terminus: Eukaryotic translation initiation factor 3 subunit K (236 aa).

Positions 42 to 222 (YDKDILVTTL…TIKSRNIEEK (181 aa)) constitute a PCI domain.

The protein belongs to the eIF-3 subunit K family. In terms of assembly, component of the eukaryotic translation initiation factor 3 (eIF-3) complex.

The protein resides in the cytoplasm. Component of the eukaryotic translation initiation factor 3 (eIF-3) complex, which is involved in protein synthesis of a specialized repertoire of mRNAs and, together with other initiation factors, stimulates binding of mRNA and methionyl-tRNAi to the 40S ribosome. The eIF-3 complex specifically targets and initiates translation of a subset of mRNAs involved in cell proliferation. The protein is Eukaryotic translation initiation factor 3 subunit K of Brugia malayi (Filarial nematode worm).